A 572-amino-acid chain; its full sequence is Proline--tRNA ligase (572 aa).

It belongs to the class-II aminoacyl-tRNA synthetase family. ProS type 1 subfamily. As to quaternary structure, homodimer.

It localises to the cytoplasm. It catalyses the reaction tRNA(Pro) + L-proline + ATP = L-prolyl-tRNA(Pro) + AMP + diphosphate. Its function is as follows. Catalyzes the attachment of proline to tRNA(Pro) in a two-step reaction: proline is first activated by ATP to form Pro-AMP and then transferred to the acceptor end of tRNA(Pro). As ProRS can inadvertently accommodate and process non-cognate amino acids such as alanine and cysteine, to avoid such errors it has two additional distinct editing activities against alanine. One activity is designated as 'pretransfer' editing and involves the tRNA(Pro)-independent hydrolysis of activated Ala-AMP. The other activity is designated 'posttransfer' editing and involves deacylation of mischarged Ala-tRNA(Pro). The misacylated Cys-tRNA(Pro) is not edited by ProRS. The polypeptide is Proline--tRNA ligase (Escherichia coli O157:H7).